A 332-amino-acid polypeptide reads, in one-letter code: Transaldolase (332 aa).

The active-site Schiff-base intermediate with substrate is Lys136.

It belongs to the transaldolase family. Type 1 subfamily.

It is found in the cytoplasm. It carries out the reaction D-sedoheptulose 7-phosphate + D-glyceraldehyde 3-phosphate = D-erythrose 4-phosphate + beta-D-fructose 6-phosphate. The protein operates within carbohydrate degradation; pentose phosphate pathway; D-glyceraldehyde 3-phosphate and beta-D-fructose 6-phosphate from D-ribose 5-phosphate and D-xylulose 5-phosphate (non-oxidative stage): step 2/3. Functionally, transaldolase is important for the balance of metabolites in the pentose-phosphate pathway. This chain is Transaldolase, found in Trichormus variabilis (strain ATCC 29413 / PCC 7937) (Anabaena variabilis).